The primary structure comprises 773 residues: Transducin-like enhancer protein 4 (773 aa).

3 disordered regions span residues 1–22 (MIRD…QPAQ), 140–162 (HGHG…AIPP), and 182–357 (LPIK…DPLA). The segment at 1 to 136 (MIRDLSKMYP…AIIGQQLQAQ (136 aa)) is q domain. The tract at residues 137-204 (HLSHGHGLPV…HQRDRDSIKS (68 aa)) is GP domain. The segment covering 183-202 (PIKDEKKHHDNDHQRDRDSI) has biased composition (basic and acidic residues). The segment covering 203–214 (KSSSVSPSASFR) has biased composition (low complexity). The interval 205–274 (SSVSPSASFR…SPRGSPAHSP (70 aa)) is ccN domain. Phosphoserine is present on residues S208, S212, S216, and S222. Residues 215–252 (GSEKHRNSTDYSSESKKQKTEEKEIAARYDSDGEKSDD) show a composition bias toward basic and acidic residues. At K237 the chain carries N6-acetyllysine. Phosphoserine is present on S245. Phosphoserine; by CK2 is present on S250. The residue at position 265 (S265) is a Phosphoserine; by CDK1. Residues S269 and S273 each carry the phosphoserine modification. A compositionally biased stretch (basic and acidic residues) spans 273 to 289 (SPRENGLDKTRLLKKDA). Positions 275 to 452 (RENGLDKTRL…PGGKPAYSFH (178 aa)) are SP domain. At K281 the chain carries N6-acetyllysine. Residues 290-305 (PISPASVASSSSTPSS) show a composition bias toward low complexity. Position 292 is a phosphoserine (S292). Residues 317-328 (TTPVSKSNTPTP) show a composition bias toward polar residues. T318 is modified (phosphothreonine). S321 and S323 each carry phosphoserine. Phosphothreonine occurs at positions 325, 327, 334, and 340. S419 is modified (phosphoserine). WD repeat units lie at residues 485 to 523 (NHGE…NKSP), 531 to 570 (NRDN…PRIK), 575 to 614 (SSAP…LVRQ), 617 to 656 (GHTD…QLQQ), 658 to 697 (DFTS…KYQL), 699 to 738 (LHES…SIFQ), and 740 to 773 (KESS…EVIY).

It belongs to the WD repeat Groucho/TLE family. Homooligomer and heterooligomer with other family members. Interacts with PAX5. Interacts with LEF1, TCF7, TCF7L1 and TCF7L2. Interacts with ZNF703; TLE4 may mediate ZNF703 transcriptional repression. Interacts with SIX3 and SIX6. Interacts with PAX2. Interacts with TLE1. In terms of processing, phosphorylated. PAX5 binding increases phosphorylation. Ubiquitinated by XIAP/BIRC4. Expressed in bone marrow-derived macrophages.

It is found in the nucleus. Its function is as follows. Transcriptional corepressor that binds to a number of transcription factors. Inhibits the transcriptional activation mediated by PAX5, and by CTNNB1 and TCF family members in Wnt signaling. The effects of full-length TLE family members may be modulated by association with dominant-negative AES. Essential for the transcriptional repressor activity of SIX3 during retina and lens development and for SIX3 transcriptional auto-repression. Involved in transcriptional repression of GNRHR and enhances MSX1-mediated transcriptional repression of CGA/alpha-GSU. This Mus musculus (Mouse) protein is Transducin-like enhancer protein 4 (Tle4).